The sequence spans 231 residues: Endo-1,4-beta-xylanase 4 (231 aa).

The N-terminal stretch at 1–18 (MVSFTTILVAATAALVAA) is a signal peptide. One can recognise a GH11 domain in the interval 42-230 (GGTPSSTGTH…SSGSSTVTIQ (189 aa)). Residue asparagine 99 is glycosylated (N-linked (GlcNAc...) asparagine). Catalysis depends on glutamate 126, which acts as the Nucleophile. Glutamate 217 serves as the catalytic Proton donor.

This sequence belongs to the glycosyl hydrolase 11 (cellulase G) family.

It localises to the secreted. It carries out the reaction Endohydrolysis of (1-&gt;4)-beta-D-xylosidic linkages in xylans.. It participates in glycan degradation; xylan degradation. Functionally, endo-1,4-beta-xylanase involved in the hydrolysis of xylan, a major structural heterogeneous polysaccharide found in plant biomass representing the second most abundant polysaccharide in the biosphere, after cellulose. The sequence is that of Endo-1,4-beta-xylanase 4 (XYL4) from Pyricularia grisea (Crabgrass-specific blast fungus).